We begin with the raw amino-acid sequence, 369 residues long: Cytoplasmic tRNA 2-thiolation protein 1 (369 aa).

It belongs to the TtcA family. CTU1/NCS6/ATPBD3 subfamily.

Its subcellular location is the cytoplasm. The protein operates within tRNA modification; 5-methoxycarbonylmethyl-2-thiouridine-tRNA biosynthesis. Functionally, plays a central role in 2-thiolation of mcm(5)S(2)U at tRNA wobble positions of tRNA(Lys), tRNA(Glu) and tRNA(Gln). Directly binds tRNAs and probably acts by catalyzing adenylation of tRNAs, an intermediate required for 2-thiolation. It is unclear whether it acts as a sulfurtransferase that transfers sulfur from thiocarboxylated URM1 onto the uridine of tRNAs at wobble position. Prior mcm(5) tRNA modification by the elongator complex is required for 2-thiolation. May also be involved in protein urmylation. The polypeptide is Cytoplasmic tRNA 2-thiolation protein 1 (Cryptococcus neoformans var. neoformans serotype D (strain JEC21 / ATCC MYA-565) (Filobasidiella neoformans)).